The following is a 111-amino-acid chain: ATP-dependent Clp protease adapter protein ClpS (111 aa).

Belongs to the ClpS family. As to quaternary structure, binds to the N-terminal domain of the chaperone ClpA.

In terms of biological role, involved in the modulation of the specificity of the ClpAP-mediated ATP-dependent protein degradation. This is ATP-dependent Clp protease adapter protein ClpS from Leptospira interrogans serogroup Icterohaemorrhagiae serovar copenhageni (strain Fiocruz L1-130).